We begin with the raw amino-acid sequence, 258 residues long: Aspartate/glutamate leucyltransferase (258 aa).

It belongs to the R-transferase family. Bpt subfamily.

It is found in the cytoplasm. It carries out the reaction N-terminal L-glutamyl-[protein] + L-leucyl-tRNA(Leu) = N-terminal L-leucyl-L-glutamyl-[protein] + tRNA(Leu) + H(+). The catalysed reaction is N-terminal L-aspartyl-[protein] + L-leucyl-tRNA(Leu) = N-terminal L-leucyl-L-aspartyl-[protein] + tRNA(Leu) + H(+). Functionally, functions in the N-end rule pathway of protein degradation where it conjugates Leu from its aminoacyl-tRNA to the N-termini of proteins containing an N-terminal aspartate or glutamate. The polypeptide is Aspartate/glutamate leucyltransferase (Rhizobium etli (strain ATCC 51251 / DSM 11541 / JCM 21823 / NBRC 15573 / CFN 42)).